The following is a 240-amino-acid chain: Protein Thf1 (240 aa).

The stretch at K186 to S222 forms a coiled coil. A disordered region spans residues E212–S240.

It belongs to the THF1 family.

In terms of biological role, may be involved in photosynthetic membrane biogenesis. This Synechocystis sp. (strain ATCC 27184 / PCC 6803 / Kazusa) protein is Protein Thf1.